The chain runs to 223 residues: Pleckstrin homology domain-containing family B member 1 (223 aa).

The PH domain maps to A2–S109.

Homodimer. Interacts (via PH domain) with MYO1C. Interacts (via PH domain) with MYO7A. Binds transducins. Highly expressed in photoreceptor cells, oligodendrocytes and throughout the myelinated parts of the central nervous system. Detected in brain, liver, kidney, spleen and trachea.

Its subcellular location is the membrane. It localises to the cytoplasm. This is Pleckstrin homology domain-containing family B member 1 (Plekhb1) from Rattus norvegicus (Rat).